The chain runs to 338 residues: Holliday junction branch migration complex subunit RuvB (338 aa).

Positions 4–184 (SDRLVSGKAR…FGISHHLQYY (181 aa)) are large ATPase domain (RuvB-L). Residues R24, G65, K68, T69, T70, 131-133 (EDY), R174, Y184, and R221 contribute to the ATP site. T69 is a Mg(2+) binding site. The interval 185–255 (HHDELTQIVM…LADEALELLA (71 aa)) is small ATPAse domain (RuvB-S). The head domain (RuvB-H) stretch occupies residues 258–338 (HLGFDALDRR…NIEVPDGRNS (81 aa)). Positions 294, 313, and 318 each coordinate DNA.

The protein belongs to the RuvB family. Homohexamer. Forms an RuvA(8)-RuvB(12)-Holliday junction (HJ) complex. HJ DNA is sandwiched between 2 RuvA tetramers; dsDNA enters through RuvA and exits via RuvB. An RuvB hexamer assembles on each DNA strand where it exits the tetramer. Each RuvB hexamer is contacted by two RuvA subunits (via domain III) on 2 adjacent RuvB subunits; this complex drives branch migration. In the full resolvosome a probable DNA-RuvA(4)-RuvB(12)-RuvC(2) complex forms which resolves the HJ.

It localises to the cytoplasm. It catalyses the reaction ATP + H2O = ADP + phosphate + H(+). In terms of biological role, the RuvA-RuvB-RuvC complex processes Holliday junction (HJ) DNA during genetic recombination and DNA repair, while the RuvA-RuvB complex plays an important role in the rescue of blocked DNA replication forks via replication fork reversal (RFR). RuvA specifically binds to HJ cruciform DNA, conferring on it an open structure. The RuvB hexamer acts as an ATP-dependent pump, pulling dsDNA into and through the RuvAB complex. RuvB forms 2 homohexamers on either side of HJ DNA bound by 1 or 2 RuvA tetramers; 4 subunits per hexamer contact DNA at a time. Coordinated motions by a converter formed by DNA-disengaged RuvB subunits stimulates ATP hydrolysis and nucleotide exchange. Immobilization of the converter enables RuvB to convert the ATP-contained energy into a lever motion, pulling 2 nucleotides of DNA out of the RuvA tetramer per ATP hydrolyzed, thus driving DNA branch migration. The RuvB motors rotate together with the DNA substrate, which together with the progressing nucleotide cycle form the mechanistic basis for DNA recombination by continuous HJ branch migration. Branch migration allows RuvC to scan DNA until it finds its consensus sequence, where it cleaves and resolves cruciform DNA. The polypeptide is Holliday junction branch migration complex subunit RuvB (Dichelobacter nodosus (strain VCS1703A)).